Consider the following 181-residue polypeptide: MDSQVTSSAKTPNPVVFFDITLGGESLGRIKMELFTSITPRTAENFRQFCTGESKSPQGRPQGYKNSKFHRVIKDFMIQGGDFVNGDGTGSRTIYGTPRFQDENFILKHDQPGLLSMANSGPNTNGCQFFITTTATPFLNNKHVVFGQVVEGMDVVRMIENTRTTRDKPNQDVTIIQCGEM.

One can recognise a PPIase cyclophilin-type domain in the interval 17–180 (FFDITLGGES…QDVTIIQCGE (164 aa)).

This sequence belongs to the cyclophilin-type PPIase family. PPIase H subfamily.

It is found in the nucleus. It catalyses the reaction [protein]-peptidylproline (omega=180) = [protein]-peptidylproline (omega=0). PPIases accelerate the folding of proteins. It catalyzes the cis-trans isomerization of proline imidic peptide bonds in oligopeptides. The chain is Peptidyl-prolyl cis-trans isomerase H (cyp3) from Aspergillus oryzae (strain ATCC 42149 / RIB 40) (Yellow koji mold).